The sequence spans 152 residues: Xanthine-guanine phosphoribosyltransferase (152 aa).

Residues 37–38, Arg-69, and 88–96 each bind 5-phospho-alpha-D-ribose 1-diphosphate; these read RG and DDLVDTGGT. Arg-69 is a binding site for GMP. Residue Asp-89 coordinates Mg(2+). Guanine contacts are provided by Asp-92 and Ile-135. 2 residues coordinate xanthine: Asp-92 and Ile-135. GMP is bound by residues 92-96 and 134-135; these read DTGGT and WI.

Belongs to the purine/pyrimidine phosphoribosyltransferase family. XGPT subfamily. In terms of assembly, homotetramer. It depends on Mg(2+) as a cofactor.

It is found in the cell inner membrane. It catalyses the reaction GMP + diphosphate = guanine + 5-phospho-alpha-D-ribose 1-diphosphate. The enzyme catalyses XMP + diphosphate = xanthine + 5-phospho-alpha-D-ribose 1-diphosphate. The catalysed reaction is IMP + diphosphate = hypoxanthine + 5-phospho-alpha-D-ribose 1-diphosphate. Its pathway is purine metabolism; GMP biosynthesis via salvage pathway; GMP from guanine: step 1/1. It participates in purine metabolism; XMP biosynthesis via salvage pathway; XMP from xanthine: step 1/1. Its function is as follows. Purine salvage pathway enzyme that catalyzes the transfer of the ribosyl-5-phosphate group from 5-phospho-alpha-D-ribose 1-diphosphate (PRPP) to the N9 position of the 6-oxopurines guanine and xanthine to form the corresponding ribonucleotides GMP (guanosine 5'-monophosphate) and XMP (xanthosine 5'-monophosphate), with the release of PPi. To a lesser extent, also acts on hypoxanthine. This is Xanthine-guanine phosphoribosyltransferase from Escherichia fergusonii (strain ATCC 35469 / DSM 13698 / CCUG 18766 / IAM 14443 / JCM 21226 / LMG 7866 / NBRC 102419 / NCTC 12128 / CDC 0568-73).